A 1305-amino-acid polypeptide reads, in one-letter code: Contactin-associated protein-like 5 (1305 aa).

The first 24 residues, 1-24, serve as a signal peptide directing secretion; the sequence is MDSVPRLTGVFTLLLSGLWHLGSS. Topologically, residues 25 to 1236 are extracellular; that stretch reads ATNYNCDDPL…PLTNAVRSDS (1212 aa). Residues 30 to 174 enclose the F5/8 type C domain; that stretch reads CDDPLASLLS…IGMRVEVYGC (145 aa). Cysteines 30 and 174 form a disulfide. Laminin G-like domains are found at residues 180-360 and 367-544; these read VADF…TFSC and PITF…IDLC. Residues asparagine 282, asparagine 355, and asparagine 496 are each glycosylated (N-linked (GlcNAc...) asparagine). A disulfide bridge links cysteine 329 with cysteine 360. 4 disulfides stabilise this stretch: cysteine 512–cysteine 544, cysteine 550–cysteine 561, cysteine 555–cysteine 570, and cysteine 572–cysteine 582. Residues 546-583 enclose the EGF-like 1 domain; the sequence is IKDRCLPNYCEHGGFCSQSWTTFYCNCSNTGYTGATCH. The Fibrinogen C-terminal domain maps to 584 to 790; that stretch reads NSLYEQSCEV…LRCYGDRHFW (207 aa). Asparagine 622 is a glycosylation site (N-linked (GlcNAc...) asparagine). The Laminin G-like 3 domain maps to 791 to 956; the sequence is NAVSFYTEAS…KVTSGVRPGC (166 aa). Intrachain disulfides connect cysteine 929/cysteine 956, cysteine 960/cysteine 973, cysteine 967/cysteine 982, cysteine 984/cysteine 994, and cysteine 1163/cysteine 1198. The region spanning 957-995 is the EGF-like 2 domain; it reads PGHCSTYGSICHNGGKCVEKYSGYFCDCTNSPYEGPFCK. The 199-residue stretch at 1000–1198 folds into the Laminin G-like 4 domain; the sequence is AVFEAGTSVT…VQGTLMESSC (199 aa). Residues 1237–1257 form a helical membrane-spanning segment; that stretch reads AVIGGVIAVVIFIIFSIIGIM. Residues 1258–1305 are Cytoplasmic-facing; that stretch reads TRFLYQHKQSHRTNQMKEKEYPENLDSSFRNDIDLQNTVSECKREYFI.

The protein belongs to the neurexin family.

The protein resides in the membrane. May play a role in the correct development and proper functioning of the peripheral and central nervous system and be involved in cell adhesion and intercellular communication. In Canis lupus familiaris (Dog), this protein is Contactin-associated protein-like 5 (CNTNAP5).